We begin with the raw amino-acid sequence, 241 residues long: tRNA pseudouridine synthase A (241 aa).

Asp-53 serves as the catalytic Nucleophile. Tyr-110 contributes to the substrate binding site.

Belongs to the tRNA pseudouridine synthase TruA family. As to quaternary structure, homodimer.

The catalysed reaction is uridine(38/39/40) in tRNA = pseudouridine(38/39/40) in tRNA. In terms of biological role, formation of pseudouridine at positions 38, 39 and 40 in the anticodon stem and loop of transfer RNAs. This chain is tRNA pseudouridine synthase A, found in Malacoplasma penetrans (strain HF-2) (Mycoplasma penetrans).